The sequence spans 276 residues: Large ribosomal subunit protein uL2 (276 aa).

Disordered stretches follow at residues 30–57 (EKSL…QGGG) and 219–276 (TVRG…RSKK).

Belongs to the universal ribosomal protein uL2 family. In terms of assembly, part of the 50S ribosomal subunit. Forms a bridge to the 30S subunit in the 70S ribosome.

In terms of biological role, one of the primary rRNA binding proteins. Required for association of the 30S and 50S subunits to form the 70S ribosome, for tRNA binding and peptide bond formation. It has been suggested to have peptidyltransferase activity; this is somewhat controversial. Makes several contacts with the 16S rRNA in the 70S ribosome. The protein is Large ribosomal subunit protein uL2 of Exiguobacterium sibiricum (strain DSM 17290 / CCUG 55495 / CIP 109462 / JCM 13490 / 255-15).